A 392-amino-acid polypeptide reads, in one-letter code: RNA-binding motif protein, X-linked-like-2 (392 aa).

Positions 8–86 (GKLFIGGLNL…KAIKVAQATK (79 aa)) constitute an RRM domain. Over residues 67 to 78 (RDMNGKSLDGKA) the composition is skewed to basic and acidic residues. A disordered region spans residues 67 to 392 (RDMNGKSLDG…LERGGGRSRY (326 aa)). The segment covering 150-163 (RGPPPRRVGPPPKR) has biased composition (pro residues). Basic and acidic residues-rich tracts occupy residues 194 to 229 (PRREPLPPRRDPYLGPRDEGYSSRDGYSSRDYREPR) and 238 to 283 (YTHR…REPF). Positions 319 to 331 (YSGGRDSYSSSYG) are enriched in low complexity. Residues 381–392 (GRLERGGGRSRY) show a composition bias toward basic and acidic residues.

In terms of tissue distribution, expressed predominantly in spermatocytes and less in round spermatids (at protein level). Expressed in germ cells.

It localises to the nucleus. This Homo sapiens (Human) protein is RNA-binding motif protein, X-linked-like-2 (RBMXL2).